The following is a 678-amino-acid chain: Protein KHNYN (678 aa).

A Phosphoserine modification is found at serine 10. Disordered regions lie at residues 222–251 (QGVR…ARGD) and 347–407 (LHNG…ARGG). The segment covering 355-367 (PRVPSPPPAPEPP) has biased composition (pro residues). Serine 359 is modified (phosphoserine). The span at 370–388 (CGDRGDCGDRGDVGDRGDK) shows a compositional bias: basic and acidic residues. The region spanning 437–589 (LRHIVIDGSN…LGRNGPTLDE (153 aa)) is the RNase NYN domain. The segment at 595–633 (ARTQGSSKAQHPSRGFAEHGKQQQGREEEKGSGGIRKTR) is disordered. A compositionally biased stretch (basic and acidic residues) spans 610-633 (FAEHGKQQQGREEEKGSGGIRKTR).

It belongs to the N4BP1 family.

The chain is Protein KHNYN (KHNYN) from Homo sapiens (Human).